A 736-amino-acid polypeptide reads, in one-letter code: Catalase-1 (736 aa).

Positions 1–29 (MSNIISQAGQKAKEALTSAPSSKKVDDLK) are disordered. Arg-89 provides a ligand contact to heme. The active site involves His-92. Position 129 (Arg-129) interacts with heme. Asn-165 is an active-site residue. Heme is bound by residues Phe-178, Arg-375, Tyr-379, and Arg-386. A cross-link (3-(S-cysteinyl)-tyrosine (Cys-Tyr)) is located at residues 356 to 379 (CTSHVVNGIGFSDDPLLQGRNFSY).

The protein belongs to the catalase family. As to quaternary structure, homotetramer. The cofactor is heme. In terms of processing, glycosylated; with alpha-glucose and/or alpha-mannose.

It is found in the secreted. Its subcellular location is the cell wall. It carries out the reaction 2 H2O2 = O2 + 2 H2O. In terms of biological role, occurs in almost all aerobically respiring organisms and serves to protect cells from the toxic effects of hydrogen peroxide. This chain is Catalase-1 (cat-1), found in Neurospora crassa (strain ATCC 24698 / 74-OR23-1A / CBS 708.71 / DSM 1257 / FGSC 987).